Reading from the N-terminus, the 344-residue chain is MIVDYEKDPRAKEAIAIWEKGVLKEKDGSMSDAINFYRSALKIHDNVESLYRKKILDEWMLHKKLSGLSMTTDAPDEQNETGKDDLSVEENAELQPCWILEILPDDILLRIIKKVILMSGESWVNLSMTCSTFSKLCFHDSVPFKTFAKYIYSKQIYDKMAMDLNGITDINTFEKEIWRGDDYRMLRERPYIKFEGVYISVVNYVRYGSNAESSLSLLKPVHMITYYRYFRFYENGQCLRLLSTDEPSAVVKHFSKENKPRHSHMCYWSLGFDYDFGHLKITRSDEKYTFIEEFQIKNQGNKRYQRLKWLSSIVVDKEGNASNCSLRNEKSFFFSRVKSFKDPG.

Residues 14 to 47 form a TPR repeat; it reads AIAIWEKGVLKEKDGSMSDAINFYRSALKIHDNV. An F-box domain is found at 98-148; the sequence is WILEILPDDILLRIIKKVILMSGESWVNLSMTCSTFSKLCFHDSVPFKTFA.

As to quaternary structure, interacts with SKP1. Component of the probable SCF(HRT3) complex containing CDC53, SKP1, RBX1 and HRT3.

Its pathway is protein modification; protein ubiquitination. Substrate recognition component of a SCF (SKP1-CUL1-F-box protein) E3 ubiquitin-protein ligase complex which mediates the ubiquitination and subsequent proteasomal degradation of target proteins. Probably recognizes and binds to phosphorylated target proteins. In Saccharomyces cerevisiae (strain ATCC 204508 / S288c) (Baker's yeast), this protein is F-box protein HRT3 (HRT3).